The sequence spans 693 residues: Sodium-dependent dopamine transporter (693 aa).

Residues 1 to 56 lie on the Cytoplasmic side of the membrane; the sequence is MSEGRCSVAHMSSVVAPAKEANAMGPKAVELVLVKEQNGVQLTNSTLLNPPQSPTE. A discontinuously helical transmembrane segment spans residues 57–95; it reads AQDRETWSKKADFLLSVIGFAVDLANVWRFPYLCYKNGG. Positions 75, 77, 78, 79, and 82 each coordinate Na(+). Asp-79 provides a ligand contact to dopamine. Helical transmembrane passes span 96 to 127 and 128 to 171; these read GAFLVPYLFFMVVAGVPLFYMELALGQFNREG and AAGV…LSSF. Dopamine contacts are provided by Ser-149 and Gly-153. Residues 172–233 are Extracellular-facing; that stretch reads TTELPWTHCN…SQGIDDLGPP (62 aa). Cys-180 and Cys-189 form a disulfide bridge. Asn-181, Asn-196, and Asn-202 each carry an N-linked (GlcNAc...) asparagine glycan. The next 2 helical transmembrane spans lie at 234-253 and 254-284; these read RWQLTSCLVLVIVLLYFSLW and KGVKTSGKVVWITATMPYVVLFALLLRGITL. Topologically, residues 285–303 are extracellular; it reads PGAVDAIRAYLSVDFHRLC. A discontinuously helical membrane pass occupies residues 304–332; that stretch reads EASVWIDAAIQICFSLGVGLGVLIAFSSY. Chloride is bound at residue Gln-314. Phe-317 provides a ligand contact to dopamine. The Na(+) site is built by Ser-318 and Asn-350. Ser-318 is a chloride binding site. Residues 333 to 373 traverse the membrane as a helical segment; it reads NKFTNNCYRDAIITTSVNSLTSFSSGFVVFSFLGYMAQKHS. Ser-354 contacts chloride. The Extracellular portion of the chain corresponds to 374–397; it reads VPIGDVAKDGPGLIFIIYPEALAT. 3 consecutive transmembrane segments (helical) span residues 398–439, 440–463, and 464–496; these read LPLS…QLLH, RHRELFTLLVVLATFLLSLFCVTN, and GGIYVFTLLDHFAAGTSILFGVLMEVIGVAWFY. Residues Leu-415, Asp-418, and Ser-419 each coordinate Na(+). Dopamine-binding residues include Ser-419 and Ala-420. Residues 497–513 are Cytoplasmic-facing; it reads GVWQFSDDIKQMTGRRP. Residues 514-539 traverse the membrane as a helical segment; sequence SLYWRLCWKFVSPCFLLFVVVVSIAT. The Extracellular portion of the chain corresponds to 540-550; it reads FRPPHYGAYVF. A helical membrane pass occupies residues 551–580; that stretch reads PEWATALGWAIAASSMSVVPIYAAYKLCSL. An interaction with TGFB1I1 region spans residues 558 to 587; the sequence is GWAIAASSMSVVPIYAAYKLCSLPGSSREK. Residues 581–693 are Cytoplasmic-facing; sequence PGSSREKLAY…VESTGLCSVY (113 aa).

Belongs to the sodium:neurotransmitter symporter (SNF) (TC 2.A.22) family. SLC6A3 subfamily. As to quaternary structure, monomer. Homooligomer; disulfide-linked. Interacts with PRKCABP and TGFB1I1. Interacts (via N-terminus) with SYNGR3 (via N-terminus). Interacts with SLC18A2. Interacts with TOR1A (ATP-bound); TOR1A regulates SLC6A3 subcellular location. Interacts with alpha-synuclein/SNCA. Interacts with SEPTIN4. Expressed in the neurons of the substantia nigra of the brain.

Its subcellular location is the cell membrane. It localises to the cell projection. The protein resides in the neuron projection. It is found in the axon. The catalysed reaction is dopamine(out) + chloride(out) + Na(+)(out) = dopamine(in) + chloride(in) + Na(+)(in). The enzyme catalyses (R)-noradrenaline(out) + chloride(out) + Na(+)(out) = (R)-noradrenaline(in) + chloride(in) + Na(+)(in). It catalyses the reaction dopamine(out) + chloride(out) + 2 Na(+)(out) = dopamine(in) + chloride(in) + 2 Na(+)(in). Its activity is regulated as follows. Inhibited by GBR 12909 dihydrochloride, amphetamine and cocaine. Inhibited by zinc ions. Functionally, mediates sodium- and chloride-dependent transport of dopamine. Also mediates sodium- and chloride-dependent transport of norepinephrine (also known as noradrenaline). Regulator of light-dependent retinal hyaloid vessel regression, downstream of OPN5 signaling. This Bos taurus (Bovine) protein is Sodium-dependent dopamine transporter (SLC6A3).